The following is a 151-amino-acid chain: Transcriptional repressor NrdR (151 aa).

Residues 3-34 fold into a zinc finger; sequence CPYCAYGESKVVDSRSTEDGSSIRRRRECLKC. Residues 49 to 139 enclose the ATP-cone domain; that stretch reads ILVIKKNMSR…VYRQFKDINT (91 aa).

This sequence belongs to the NrdR family. Zn(2+) serves as cofactor.

Functionally, negatively regulates transcription of bacterial ribonucleotide reductase nrd genes and operons by binding to NrdR-boxes. This chain is Transcriptional repressor NrdR, found in Clostridium botulinum (strain ATCC 19397 / Type A).